We begin with the raw amino-acid sequence, 421 residues long: MDKIVVKGGKKLKGEVNINTAKNSVLPIIAGSILATDGVLINELPMLQDVFTICNVMEQLGYDLKIDKKENKLIVPPLNKDPLIPSEDLVKKMRASFLIMGPMIAKYGEFKLARPGGCNIGSRPIELHLKGLRALGAEDSNCGNGFVCIKAKKLTGSKIYLDFPSVGATENIMMAATMAKGTTVIENAAQEPEITDLINFLNSMGAKIYIEKPGKIIIEGVDSLTSTEYTPIYDRIEAGTFMVAAAITGSEIKINGVNKDHCSAIISKLKEAGTEFFDIHNDENSIIVKGNEEIKPINIKTMPYPGYPTDMQSQMMSLLSIAKGSSIITESVFENRFMNVDELRRMGANIQVEGRTALIEGVDNLTGCEVKATDLRAGAALILAGLVAKGETIVTDIYHIDRGYVEIENKFRALGADISRI.

A phosphoenolpyruvate-binding site is contributed by 22 to 23 (KN). Arg-94 contributes to the UDP-N-acetyl-alpha-D-glucosamine binding site. Cys-118 (proton donor) is an active-site residue. The residue at position 118 (Cys-118) is a 2-(S-cysteinyl)pyruvic acid O-phosphothioketal. UDP-N-acetyl-alpha-D-glucosamine is bound by residues 123 to 127 (RPIEL), Asp-310, and Val-332.

This sequence belongs to the EPSP synthase family. MurA subfamily.

Its subcellular location is the cytoplasm. The catalysed reaction is phosphoenolpyruvate + UDP-N-acetyl-alpha-D-glucosamine = UDP-N-acetyl-3-O-(1-carboxyvinyl)-alpha-D-glucosamine + phosphate. Its pathway is cell wall biogenesis; peptidoglycan biosynthesis. Cell wall formation. Adds enolpyruvyl to UDP-N-acetylglucosamine. The polypeptide is UDP-N-acetylglucosamine 1-carboxyvinyltransferase 1 (Clostridium perfringens (strain 13 / Type A)).